A 466-amino-acid polypeptide reads, in one-letter code: Purple acid phosphatase 6 (466 aa).

An N-terminal signal peptide occupies residues 1-20 (MKNLVIFAFLFLSITTVING). Residue Asn88 is glycosylated (N-linked (GlcNAc...) asparagine). Asp164 is a binding site for Fe cation. Asn172 carries an N-linked (GlcNAc...) asparagine glycan. Residues Asp192 and Tyr195 each contribute to the Fe cation site. Residue Asp192 participates in Zn(2+) binding. 2 residues coordinate Zn(2+): Asn229 and His314. Asn229 serves as a coordination point for substrate. His324 functions as the Proton donor in the catalytic mechanism. Residue His351 coordinates Zn(2+). 351–353 (HVH) serves as a coordination point for substrate. Position 353 (His353) interacts with Fe cation. Residues Asn367 and Asn424 are each glycosylated (N-linked (GlcNAc...) asparagine).

Belongs to the metallophosphoesterase superfamily. Purple acid phosphatase family. Homodimer. The cofactor is Fe cation. Requires Zn(2+) as cofactor. Specifically expressed in flowers.

It localises to the secreted. The catalysed reaction is a phosphate monoester + H2O = an alcohol + phosphate. In Arabidopsis thaliana (Mouse-ear cress), this protein is Purple acid phosphatase 6 (PAP6).